Reading from the N-terminus, the 179-residue chain is Putative manganese efflux pump MntP (179 aa).

The next 6 membrane-spanning stretches (helical) occupy residues 4-24 (VLILAFALSMDAFAVSIGLGI), 39-59 (LFFGIFQALMPFLGFLGGIGL), 69-89 (IVAFILLLAIGGKMIYEAFNE), 102-122 (ILLTLAIATSLDAMAAGYSLH), 128-148 (IYLSLFVIGFTTFIISYIGVY), and 159-179 (SKAEILGGVVLILIGLKILLF).

This sequence belongs to the MntP (TC 9.B.29) family.

It is found in the cell inner membrane. In terms of biological role, probably functions as a manganese efflux pump. In Aliarcobacter butzleri (strain RM4018) (Arcobacter butzleri), this protein is Putative manganese efflux pump MntP.